The chain runs to 718 residues: Catalase (718 aa).

Active-site residues include H103 and N176. Position 390 (Y390) interacts with heme.

It belongs to the catalase family. It depends on heme as a cofactor.

Its subcellular location is the peroxisome matrix. It catalyses the reaction 2 H2O2 = O2 + 2 H2O. Its function is as follows. Catalyzes the degradation of hydrogen peroxide (H(2)O(2)) generated by peroxisomal oxidases to water and oxygen, thereby protecting cells from the toxic effects of hydrogen peroxide. The protein is Catalase (CAT1) of Blumeria hordei (Barley powdery mildew).